The primary structure comprises 232 residues: Thiamine import ATP-binding protein ThiQ (232 aa).

The 229-residue stretch at 2–230 folds into the ABC transporter domain; that stretch reads LKLTDITWLY…KASASAILGI (229 aa). Position 32–39 (32–39) interacts with ATP; it reads GPSGAGKS.

This sequence belongs to the ABC transporter superfamily. Thiamine importer (TC 3.A.1.19.1) family. The complex is composed of two ATP-binding proteins (ThiQ), two transmembrane proteins (ThiP) and a solute-binding protein (ThiB).

It localises to the cell inner membrane. The catalysed reaction is thiamine(out) + ATP + H2O = thiamine(in) + ADP + phosphate + H(+). Part of the ABC transporter complex ThiBPQ involved in thiamine import. Responsible for energy coupling to the transport system. The polypeptide is Thiamine import ATP-binding protein ThiQ (Shigella flexneri serotype 5b (strain 8401)).